The following is a 350-amino-acid chain: Serpentine receptor class beta-12 (350 aa).

Over 1 to 21 (MSEANLTECELAYQLTYHPFY) the chain is Extracellular. An N-linked (GlcNAc...) asparagine glycan is attached at asparagine 5. A helical transmembrane segment spans residues 22–42 (MIAQFWSFFVSLLAMPSLIFF). The Cytoplasmic segment spans residues 43–57 (MVEKVFKLPFHGNLK). A helical transmembrane segment spans residues 58 to 78 (FLLVSYFIGTFLFASIICFTF). At 79–103 (GYHFFVPFFVTSNCDLIINATLFKY) the chain is on the extracellular side. N-linked (GlcNAc...) asparagine glycosylation occurs at asparagine 97. Residues 104-124 (GHMIALIFMTIPMILPTAFTV) form a helical membrane-spanning segment. Over 125-141 (ERFVALKMAHSYEHVRT) the chain is Cytoplasmic. A helical transmembrane segment spans residues 142 to 162 (LLGPVLVLVVIAIDSMFLYDI). At 163–189 (YGQEKFDKPFINFILVPATSALQFNSF) the chain is on the extracellular side. A helical transmembrane segment spans residues 190–210 (LWYMLYLKITNFICNLILLFI). The Cytoplasmic portion of the chain corresponds to 211-243 (HKILHQSSRYRRKNVSLSVKYEMQEISQSSRFT). The chain crosses the membrane as a helical span at residues 244-264 (LIVTFTHLLFFGWYVSTILLI). Residues 265-282 (RTVGPDFFRGFINYTVMR) lie on the Extracellular side of the membrane. Asparagine 277 carries an N-linked (GlcNAc...) asparagine glycan. The helical transmembrane segment at 283-303 (GVYCATPTYNLVIVFIGFKAL) threads the bilayer. The Cytoplasmic portion of the chain corresponds to 304–350 (NHLNFKRNNKVQSTIQIKSTGQEGAENYDNAISNYWDSVYTMNKSKL).

Belongs to the nematode receptor-like protein srb family. As to expression, expressed throughout the head.

Its subcellular location is the cell membrane. It is found in the perikaryon. The protein resides in the cell projection. The protein localises to the dendrite. G-protein coupled receptor. Plays a role in the navigational capacity of sperm and promotes the targeting of sperm derived from males to the fertilization site in the uterus of hermaphrodites. This Caenorhabditis elegans protein is Serpentine receptor class beta-12.